A 100-amino-acid polypeptide reads, in one-letter code: Small ribosomal subunit protein bS20 (100 aa).

Basic residues predominate over residues 1–20 (MASGKPKKKNPRLASGRKRV). The disordered stretch occupies residues 1–21 (MASGKPKKKNPRLASGRKRVR).

This sequence belongs to the bacterial ribosomal protein bS20 family.

In terms of biological role, binds directly to 16S ribosomal RNA. The polypeptide is Small ribosomal subunit protein bS20 (Albidiferax ferrireducens (strain ATCC BAA-621 / DSM 15236 / T118) (Rhodoferax ferrireducens)).